The chain runs to 134 residues: ATP synthase epsilon chain (134 aa).

This sequence belongs to the ATPase epsilon chain family. F-type ATPases have 2 components, CF(1) - the catalytic core - and CF(0) - the membrane proton channel. CF(1) has five subunits: alpha(3), beta(3), gamma(1), delta(1), epsilon(1). CF(0) has three main subunits: a, b and c.

The protein resides in the cell membrane. Its function is as follows. Produces ATP from ADP in the presence of a proton gradient across the membrane. In Carboxydothermus hydrogenoformans (strain ATCC BAA-161 / DSM 6008 / Z-2901), this protein is ATP synthase epsilon chain.